Here is a 602-residue protein sequence, read N- to C-terminus: ATP-dependent lipid A-core flippase 1 (602 aa).

A run of 5 helical transmembrane segments spans residues 36–56 (LGFVAAIIGMLGYAAIDVYFL), 80–100 (LFIIVAFTVRGIAHFIANYCL), 154–174 (ILTIVQQSAFIIGLLGLMFYY), 176–196 (WQLSLIFLLITPIIAVIVSVV), and 261–281 (ASVPIIQVIASFALAFVFYAI). The ABC transmembrane type-1 domain occupies 39–321 (VAAIIGMLGY…LTNVNSEFQQ (283 aa)). The ABC transporter domain maps to 362 to 599 (YKNTNTMTTS…QGAYAQLHSF (238 aa)). Residue 398 to 405 (GRSGSGKS) participates in ATP binding.

It belongs to the ABC transporter superfamily. Lipid exporter (TC 3.A.1.106) family. As to quaternary structure, homodimer.

It is found in the cell inner membrane. It catalyses the reaction ATP + H2O + lipid A-core oligosaccharideSide 1 = ADP + phosphate + lipid A-core oligosaccharideSide 2.. In terms of biological role, involved in lipopolysaccharide (LPS) biosynthesis. Translocates lipid A-core from the inner to the outer leaflet of the inner membrane. Transmembrane domains (TMD) form a pore in the inner membrane and the ATP-binding domain (NBD) is responsible for energy generation. The polypeptide is ATP-dependent lipid A-core flippase 1 (Colwellia psychrerythraea (strain 34H / ATCC BAA-681) (Vibrio psychroerythus)).